A 401-amino-acid polypeptide reads, in one-letter code: Ribosomal protein uS12 methylthiotransferase RimO (401 aa).

In terms of domain architecture, MTTase N-terminal spans 1–108; the sequence is MKINFINLGC…GIELLQTPKR (108 aa). Positions 10, 43, 72, 124, 128, and 131 each coordinate [4Fe-4S] cluster. The Radical SAM core domain maps to 110–339; it reads LTTKHYAYLK…FNLSQEILEE (230 aa).

This sequence belongs to the methylthiotransferase family. RimO subfamily. It depends on [4Fe-4S] cluster as a cofactor.

Its subcellular location is the cytoplasm. The enzyme catalyses L-aspartate(89)-[ribosomal protein uS12]-hydrogen + (sulfur carrier)-SH + AH2 + 2 S-adenosyl-L-methionine = 3-methylsulfanyl-L-aspartate(89)-[ribosomal protein uS12]-hydrogen + (sulfur carrier)-H + 5'-deoxyadenosine + L-methionine + A + S-adenosyl-L-homocysteine + 2 H(+). Catalyzes the methylthiolation of an aspartic acid residue of ribosomal protein uS12. The protein is Ribosomal protein uS12 methylthiotransferase RimO of Hydrogenobaculum sp. (strain Y04AAS1).